The primary structure comprises 314 residues: Elongation factor Ts (314 aa).

The involved in Mg(2+) ion dislocation from EF-Tu stretch occupies residues 82 to 85 (TDFV).

It belongs to the EF-Ts family.

It localises to the cytoplasm. In terms of biological role, associates with the EF-Tu.GDP complex and induces the exchange of GDP to GTP. It remains bound to the aminoacyl-tRNA.EF-Tu.GTP complex up to the GTP hydrolysis stage on the ribosome. The protein is Elongation factor Ts of Nostoc punctiforme (strain ATCC 29133 / PCC 73102).